Here is a 269-residue protein sequence, read N- to C-terminus: tRNA pseudouridine synthase A (269 aa).

The Nucleophile role is filled by Asp51. Tyr109 serves as a coordination point for substrate.

Belongs to the tRNA pseudouridine synthase TruA family. Homodimer.

The enzyme catalyses uridine(38/39/40) in tRNA = pseudouridine(38/39/40) in tRNA. Its function is as follows. Formation of pseudouridine at positions 38, 39 and 40 in the anticodon stem and loop of transfer RNAs. This chain is tRNA pseudouridine synthase A, found in Haemophilus influenzae (strain PittGG).